We begin with the raw amino-acid sequence, 451 residues long: tRNA-2-methylthio-N(6)-dimethylallyladenosine synthase (451 aa).

The MTTase N-terminal domain occupies 6–122 (RHYHITTFGC…LQDLLEQVFN (117 aa)). Cys15, Cys51, Cys85, Cys157, Cys161, and Cys164 together coordinate [4Fe-4S] cluster. Residues 143 to 380 (RDSKITAWVN…NHLVGVKAAD (238 aa)) enclose the Radical SAM core domain. Positions 383 to 447 (QRYMGRIEEV…PFSLTGEVKE (65 aa)) constitute a TRAM domain.

It belongs to the methylthiotransferase family. MiaB subfamily. Monomer. The cofactor is [4Fe-4S] cluster.

It is found in the cytoplasm. It carries out the reaction N(6)-dimethylallyladenosine(37) in tRNA + (sulfur carrier)-SH + AH2 + 2 S-adenosyl-L-methionine = 2-methylsulfanyl-N(6)-dimethylallyladenosine(37) in tRNA + (sulfur carrier)-H + 5'-deoxyadenosine + L-methionine + A + S-adenosyl-L-homocysteine + 2 H(+). In terms of biological role, catalyzes the methylthiolation of N6-(dimethylallyl)adenosine (i(6)A), leading to the formation of 2-methylthio-N6-(dimethylallyl)adenosine (ms(2)i(6)A) at position 37 in tRNAs that read codons beginning with uridine. The chain is tRNA-2-methylthio-N(6)-dimethylallyladenosine synthase from Trichodesmium erythraeum (strain IMS101).